We begin with the raw amino-acid sequence, 35 residues long: uncharacterized protein (35 aa).

Residues 1 to 27 (MDQNEANIYNENNENNENNENENCQNE) are compositionally biased toward low complexity. Residues 1–35 (MDQNEANIYNENNENNENNENENCQNEPIRIKIII) form a disordered region.

This is an uncharacterized protein from Dictyostelium discoideum (Social amoeba).